Consider the following 164-residue polypeptide: Dynein regulatory complex protein 8 (164 aa).

EF-hand domains follow at residues 16–51 (ELHK…LGCC) and 94–129 (AAED…EGEP).

The protein belongs to the DRC8 family. As to quaternary structure, component of the nexin-dynein regulatory complex (N-DRC).

The protein resides in the cytoplasm. The protein localises to the cytoskeleton. Its subcellular location is the flagellum axoneme. In terms of biological role, component of the nexin-dynein regulatory complex (N-DRC), a key regulator of ciliary/flagellar motility which maintains the alignment and integrity of the distal axoneme and regulates microtubule sliding in motile axonemes. In Mus musculus (Mouse), this protein is Dynein regulatory complex protein 8 (Efcab2).